We begin with the raw amino-acid sequence, 759 residues long: Phosphoribosylformylglycinamidine synthase subunit PurL (759 aa).

The active site involves H61. Residues Y64 and K105 each coordinate ATP. Residue E107 coordinates Mg(2+). Substrate-binding positions include 108–111 and R130; that span reads SHNH. H109 acts as the Proton acceptor in catalysis. D131 lines the Mg(2+) pocket. Substrate is bound at residue Q260. D288 is a Mg(2+) binding site. Residue 332-334 participates in substrate binding; the sequence is ESQ. ATP contacts are provided by D520 and G557. A Mg(2+)-binding site is contributed by N558. A substrate-binding site is contributed by S560.

The protein belongs to the FGAMS family. As to quaternary structure, monomer. Part of the FGAM synthase complex composed of 1 PurL, 1 PurQ and 2 PurS subunits.

It localises to the cytoplasm. The catalysed reaction is N(2)-formyl-N(1)-(5-phospho-beta-D-ribosyl)glycinamide + L-glutamine + ATP + H2O = 2-formamido-N(1)-(5-O-phospho-beta-D-ribosyl)acetamidine + L-glutamate + ADP + phosphate + H(+). Its pathway is purine metabolism; IMP biosynthesis via de novo pathway; 5-amino-1-(5-phospho-D-ribosyl)imidazole from N(2)-formyl-N(1)-(5-phospho-D-ribosyl)glycinamide: step 1/2. Its function is as follows. Part of the phosphoribosylformylglycinamidine synthase complex involved in the purines biosynthetic pathway. Catalyzes the ATP-dependent conversion of formylglycinamide ribonucleotide (FGAR) and glutamine to yield formylglycinamidine ribonucleotide (FGAM) and glutamate. The FGAM synthase complex is composed of three subunits. PurQ produces an ammonia molecule by converting glutamine to glutamate. PurL transfers the ammonia molecule to FGAR to form FGAM in an ATP-dependent manner. PurS interacts with PurQ and PurL and is thought to assist in the transfer of the ammonia molecule from PurQ to PurL. The protein is Phosphoribosylformylglycinamidine synthase subunit PurL of Thermoplasma acidophilum (strain ATCC 25905 / DSM 1728 / JCM 9062 / NBRC 15155 / AMRC-C165).